The following is a 329-amino-acid chain: Phosphate acyltransferase (329 aa).

Belongs to the PlsX family. As to quaternary structure, homodimer. Probably interacts with PlsY.

It is found in the cytoplasm. It carries out the reaction a fatty acyl-[ACP] + phosphate = an acyl phosphate + holo-[ACP]. Its pathway is lipid metabolism; phospholipid metabolism. Functionally, catalyzes the reversible formation of acyl-phosphate (acyl-PO(4)) from acyl-[acyl-carrier-protein] (acyl-ACP). This enzyme utilizes acyl-ACP as fatty acyl donor, but not acyl-CoA. The chain is Phosphate acyltransferase from Campylobacter lari (strain RM2100 / D67 / ATCC BAA-1060).